A 138-amino-acid chain; its full sequence is Putative pre-16S rRNA nuclease (138 aa).

It belongs to the YqgF nuclease family.

The protein resides in the cytoplasm. Could be a nuclease involved in processing of the 5'-end of pre-16S rRNA. This Salmonella arizonae (strain ATCC BAA-731 / CDC346-86 / RSK2980) protein is Putative pre-16S rRNA nuclease.